The chain runs to 294 residues: IVFRAAQERSDIEIVAINDLLDADYMAYMLKYDSTHGRFNGTVEVKDGHLIVNGKKIRVTAERDPANLKWDEVGVDVVAEATGLFLTDETARKHITAGAKKVVLTGPSKDNTPMFVKGANFDKYEGQDIVSNASCTTNCLAPLAKVINDNFGIIEGLMTTVHATTATQKTVDGPSHKDWRGGRGASQNIIPSSTGAAKAVGKVLPELNGKLTGMAFRVPTPNVSVVDLTVRLEKAASYEEIKKAIKAASEGPMKGVLGYTEDDVVSTDFNGEVCTSVFDAKAGIALNDNFVKLV.

NAD(+) is bound by residues Asp19, Arg63, and Thr105. Residues 134–136 (SCT) and Thr165 contribute to the D-glyceraldehyde 3-phosphate site. Cys135 serves as the catalytic Nucleophile. Residues 169–188 (KTVDGPSHKDWRGGRGASQN) are disordered. D-glyceraldehyde 3-phosphate is bound by residues 194–195 (TG) and Arg217.

Belongs to the glyceraldehyde-3-phosphate dehydrogenase family. Homotetramer.

It is found in the cytoplasm. It carries out the reaction D-glyceraldehyde 3-phosphate + phosphate + NAD(+) = (2R)-3-phospho-glyceroyl phosphate + NADH + H(+). It functions in the pathway carbohydrate degradation; glycolysis; pyruvate from D-glyceraldehyde 3-phosphate: step 1/5. Its function is as follows. Catalyzes the oxidative phosphorylation of glyceraldehyde 3-phosphate (G3P) to 1,3-bisphosphoglycerate (BPG) using the cofactor NAD. The first reaction step involves the formation of a hemiacetal intermediate between G3P and a cysteine residue, and this hemiacetal intermediate is then oxidized to a thioester, with concomitant reduction of NAD to NADH. The reduced NADH is then exchanged with the second NAD, and the thioester is attacked by a nucleophilic inorganic phosphate to produce BPG. In Citrobacter freundii, this protein is Glyceraldehyde-3-phosphate dehydrogenase (gap).